A 416-amino-acid chain; its full sequence is Cotranscriptional regulator ARB2A homolog (416 aa).

A signal peptide spans 1–23 (MHFYFNVLNLLTVWVMMAQLQQG). Residues 211–248 (AQVQLSSDSSDEPAEKRERKDKIQKETKKRRDFYEKYR) are disordered. The segment covering 223–236 (PAEKRERKDKIQKE) has biased composition (basic and acidic residues). The Nucleophile role is filled by serine 293. Asparagine 397 carries an N-linked (GlcNAc...) asparagine glycan.

It belongs to the ARB2A family.

It is found in the nucleus. The protein resides in the cytoplasm. Its function is as follows. May play role in the regulation of alternative splicing. May have hydrolase activity. The sequence is that of Cotranscriptional regulator ARB2A homolog (ARB2A) from Gallus gallus (Chicken).